Reading from the N-terminus, the 572-residue chain is Glypican-5 (572 aa).

The N-terminal stretch at M1–S24 is a signal peptide. N120 and N237 each carry an N-linked (GlcNAc...) asparagine glycan. S486 carries an O-linked (Xyl...) (glycosaminoglycan) serine glycan. The N-linked (GlcNAc...) asparagine glycan is linked to N493. Residues S495, S507, and S509 are each glycosylated (O-linked (Xyl...) (glycosaminoglycan) serine). A glycan (N-linked (GlcNAc...) asparagine) is linked at N527.

The protein belongs to the glypican family.

Its subcellular location is the cell membrane. The protein resides in the secreted. It is found in the extracellular space. Cell surface proteoglycan that bears heparan sulfate. This is Glypican-5 (Gpc5) from Mus musculus (Mouse).